The following is a 611-amino-acid chain: MAU2 chromatid cohesion factor homolog (611 aa).

TPR repeat units lie at residues 11–46, 91–124, 131–164, 371–404, and 490–523; these read YAGL…NPPP, FEAS…TSGE, FRLF…AEQC, PILH…ADNP, and ACSL…SGKI. Residues 581 to 611 form a disordered region; that stretch reads WTGAVSPTKSSTIPPQQSFQTWSQPGPSRLS. Polar residues predominate over residues 585–611; it reads VSPTKSSTIPPQQSFQTWSQPGPSRLS.

It belongs to the SCC4/mau-2 family. Component of the cohesin loading complex.

The protein localises to the nucleus. It localises to the nucleoplasm. In terms of biological role, required for association of the cohesin complex with chromatin during interphase. Plays a role in sister chromatid cohesion and normal progression through prometaphase. This Nematostella vectensis (Starlet sea anemone) protein is MAU2 chromatid cohesion factor homolog.